Consider the following 403-residue polypeptide: Acetylornithine/succinyldiaminopimelate aminotransferase (403 aa).

Residues 107–108 (GA) and phenylalanine 140 contribute to the pyridoxal 5'-phosphate site. A N(2)-acetyl-L-ornithine-binding site is contributed by arginine 143. 225 to 228 (DEVQ) contacts pyridoxal 5'-phosphate. At lysine 254 the chain carries N6-(pyridoxal phosphate)lysine. Threonine 282 contributes to the N(2)-acetyl-L-ornithine binding site. Threonine 283 is a pyridoxal 5'-phosphate binding site.

Belongs to the class-III pyridoxal-phosphate-dependent aminotransferase family. ArgD subfamily. Homodimer. It depends on pyridoxal 5'-phosphate as a cofactor.

The protein resides in the cytoplasm. The catalysed reaction is N(2)-acetyl-L-ornithine + 2-oxoglutarate = N-acetyl-L-glutamate 5-semialdehyde + L-glutamate. The enzyme catalyses N-succinyl-(2S,6S)-2,6-diaminopimelate + 2-oxoglutarate = (S)-2-succinylamino-6-oxoheptanedioate + L-glutamate. The protein operates within amino-acid biosynthesis; L-arginine biosynthesis; N(2)-acetyl-L-ornithine from L-glutamate: step 4/4. It functions in the pathway amino-acid biosynthesis; L-lysine biosynthesis via DAP pathway; LL-2,6-diaminopimelate from (S)-tetrahydrodipicolinate (succinylase route): step 2/3. Its function is as follows. Involved in both the arginine and lysine biosynthetic pathways. The chain is Acetylornithine/succinyldiaminopimelate aminotransferase from Photorhabdus laumondii subsp. laumondii (strain DSM 15139 / CIP 105565 / TT01) (Photorhabdus luminescens subsp. laumondii).